The primary structure comprises 1230 residues: ATP-dependent helicase/nuclease subunit A (1230 aa).

In terms of domain architecture, UvrD-like helicase ATP-binding spans 4 to 480; it reads RNWTGPQEAA…IDLSHNFRSR (477 aa). 25-32 contacts ATP; it reads AGAGSGKT. One can recognise a UvrD-like helicase C-terminal domain in the interval 517-799; the sequence is AQLEGSGPPV…RIMSIHQAKG (283 aa). Positions 535 to 554 are disordered; the sequence is TSVGRDTAGTADDEPDRSDE. Residues 545–554 are compositionally biased toward acidic residues; the sequence is ADDEPDRSDE.

It belongs to the helicase family. AddA subfamily. In terms of assembly, heterodimer of AddA and AddB/RexB. It depends on Mg(2+) as a cofactor.

It carries out the reaction Couples ATP hydrolysis with the unwinding of duplex DNA by translocating in the 3'-5' direction.. The catalysed reaction is ATP + H2O = ADP + phosphate + H(+). In terms of biological role, the heterodimer acts as both an ATP-dependent DNA helicase and an ATP-dependent, dual-direction single-stranded exonuclease. Recognizes the chi site generating a DNA molecule suitable for the initiation of homologous recombination. The AddA nuclease domain is required for chi fragment generation; this subunit has the helicase and 3' -&gt; 5' nuclease activities. The sequence is that of ATP-dependent helicase/nuclease subunit A from Desulforudis audaxviator (strain MP104C).